We begin with the raw amino-acid sequence, 335 residues long: Nucleoid-associated protein YejK (335 aa).

This sequence belongs to the YejK family.

It is found in the cytoplasm. The protein localises to the nucleoid. This Salmonella arizonae (strain ATCC BAA-731 / CDC346-86 / RSK2980) protein is Nucleoid-associated protein YejK.